The primary structure comprises 504 residues: Alpha,alpha-trehalose-phosphate synthase [UDP-forming] (504 aa).

2 residues coordinate D-glucose 6-phosphate: tyrosine 97 and aspartate 151. UDP is bound by residues arginine 287 and lysine 292. UDP-alpha-D-glucose is bound by residues arginine 287 and lysine 292. Arginine 325 provides a ligand contact to D-glucose 6-phosphate. 386–394 contributes to the UDP-alpha-D-glucose binding site; it reads DGMNLVSYE. UDP is bound at residue 390–394; the sequence is LVSYE. The disordered stretch occupies residues 482–504; sequence AGKLPTKETPVNGETSKLETSSQ. Residues 493–504 are compositionally biased toward polar residues; that stretch reads NGETSKLETSSQ.

The protein belongs to the glycosyltransferase 20 family.

It catalyses the reaction D-glucose 6-phosphate + UDP-alpha-D-glucose = alpha,alpha-trehalose 6-phosphate + UDP + H(+). The protein operates within carbohydrate biosynthesis. Synthase catalytic subunit of the trehalose synthase complex that catalyzes the production of trehalose from glucose-6-phosphate and UDP-alpha-D-glucose in a two step process. The chain is Alpha,alpha-trehalose-phosphate synthase [UDP-forming] (tpsA) from Emericella nidulans (strain FGSC A4 / ATCC 38163 / CBS 112.46 / NRRL 194 / M139) (Aspergillus nidulans).